A 90-amino-acid polypeptide reads, in one-letter code: Small ribosomal subunit protein uS15c (90 aa).

The protein belongs to the universal ribosomal protein uS15 family. As to quaternary structure, part of the 30S ribosomal subunit.

The protein localises to the plastid. It localises to the chloroplast. The chain is Small ribosomal subunit protein uS15c (rps15) from Liriodendron tulipifera (Tuliptree).